A 458-amino-acid polypeptide reads, in one-letter code: UPF0210 protein Mevan_0738 (458 aa).

This sequence belongs to the UPF0210 family.

This chain is UPF0210 protein Mevan_0738, found in Methanococcus vannielii (strain ATCC 35089 / DSM 1224 / JCM 13029 / OCM 148 / SB).